The primary structure comprises 89 residues: Small ribosomal subunit protein uS15 (89 aa).

Belongs to the universal ribosomal protein uS15 family. In terms of assembly, part of the 30S ribosomal subunit. Forms a bridge to the 50S subunit in the 70S ribosome, contacting the 23S rRNA.

Functionally, one of the primary rRNA binding proteins, it binds directly to 16S rRNA where it helps nucleate assembly of the platform of the 30S subunit by binding and bridging several RNA helices of the 16S rRNA. In terms of biological role, forms an intersubunit bridge (bridge B4) with the 23S rRNA of the 50S subunit in the ribosome. This Pediococcus pentosaceus (strain ATCC 25745 / CCUG 21536 / LMG 10740 / 183-1w) protein is Small ribosomal subunit protein uS15.